The following is a 270-amino-acid chain: Phosphatidylglycerol--prolipoprotein diacylglyceryl transferase (270 aa).

7 helical membrane-spanning segments follow: residues 14–34, 60–80, 95–115, 128–148, 176–196, 202–222, and 238–258; these read VIFE…LLGF, LLFN…VLFY, VWEG…AMLI, ADFV…GNFI, SQLY…NWYI, IGAT…IVEF, and ISMG…IMLV. A 1,2-diacyl-sn-glycero-3-phospho-(1'-sn-glycerol) is bound at residue R143.

It belongs to the Lgt family.

It is found in the cell inner membrane. The catalysed reaction is L-cysteinyl-[prolipoprotein] + a 1,2-diacyl-sn-glycero-3-phospho-(1'-sn-glycerol) = an S-1,2-diacyl-sn-glyceryl-L-cysteinyl-[prolipoprotein] + sn-glycerol 1-phosphate + H(+). It participates in protein modification; lipoprotein biosynthesis (diacylglyceryl transfer). Catalyzes the transfer of the diacylglyceryl group from phosphatidylglycerol to the sulfhydryl group of the N-terminal cysteine of a prolipoprotein, the first step in the formation of mature lipoproteins. This is Phosphatidylglycerol--prolipoprotein diacylglyceryl transferase from Pasteurella multocida (strain Pm70).